The following is a 142-amino-acid chain: Transcription antitermination protein NusB (142 aa).

The protein belongs to the NusB family.

In terms of biological role, involved in transcription antitermination. Required for transcription of ribosomal RNA (rRNA) genes. Binds specifically to the boxA antiterminator sequence of the ribosomal RNA (rrn) operons. In Roseiflexus sp. (strain RS-1), this protein is Transcription antitermination protein NusB.